A 359-amino-acid chain; its full sequence is UDP-3-O-acylglucosamine N-acyltransferase (359 aa).

H253 (proton acceptor) is an active-site residue.

This sequence belongs to the transferase hexapeptide repeat family. LpxD subfamily. As to quaternary structure, homotrimer.

It catalyses the reaction a UDP-3-O-[(3R)-3-hydroxyacyl]-alpha-D-glucosamine + a (3R)-hydroxyacyl-[ACP] = a UDP-2-N,3-O-bis[(3R)-3-hydroxyacyl]-alpha-D-glucosamine + holo-[ACP] + H(+). The protein operates within bacterial outer membrane biogenesis; LPS lipid A biosynthesis. Catalyzes the N-acylation of UDP-3-O-acylglucosamine using 3-hydroxyacyl-ACP as the acyl donor. Is involved in the biosynthesis of lipid A, a phosphorylated glycolipid that anchors the lipopolysaccharide to the outer membrane of the cell. The protein is UDP-3-O-acylglucosamine N-acyltransferase of Burkholderia lata (strain ATCC 17760 / DSM 23089 / LMG 22485 / NCIMB 9086 / R18194 / 383).